Here is a 134-residue protein sequence, read N- to C-terminus: Profilin-1 (134 aa).

A disulfide bridge connects residues Cys13 and Cys118. The Involved in PIP2 interaction motif lies at 84-100; the sequence is AVIRGKKGSGGITIKKT. At Thr114 the chain carries Phosphothreonine.

This sequence belongs to the profilin family. As to quaternary structure, occurs in many kinds of cells as a complex with monomeric actin in a 1:1 ratio. Phosphorylated by MAP kinases.

The protein resides in the cytoplasm. It localises to the cytoskeleton. In terms of biological role, binds to actin and affects the structure of the cytoskeleton. At high concentrations, profilin prevents the polymerization of actin, whereas it enhances it at low concentrations. This is Profilin-1 from Olea europaea (Common olive).